Here is a 300-residue protein sequence, read N- to C-terminus: Transcription initiation factor IIB 1 (300 aa).

The TFIIB-type zinc finger occupies 3–34 (GKRVCPVCGSTEFIYDPSRGEIVCKVCGYVIE). Residues Cys-7, Cys-10, Cys-26, and Cys-29 each contribute to the Zn(2+) site. Tandem repeats lie at residues 114-197 (SELD…ARHL) and 210-291 (DYVN…ELVE).

It belongs to the TFIIB family.

Its function is as follows. Stabilizes TBP binding to an archaeal box-A promoter. Also responsible for recruiting RNA polymerase II to the pre-initiation complex (DNA-TBP-TFIIB). This is Transcription initiation factor IIB 1 from Thermococcus kodakarensis (strain ATCC BAA-918 / JCM 12380 / KOD1) (Pyrococcus kodakaraensis (strain KOD1)).